The primary structure comprises 298 residues: Ribosomal protein L11 methyltransferase (298 aa).

Residues Thr-139, Gly-163, Asp-185, and Asn-232 each coordinate S-adenosyl-L-methionine.

The protein belongs to the methyltransferase superfamily. PrmA family.

It localises to the cytoplasm. The enzyme catalyses L-lysyl-[protein] + 3 S-adenosyl-L-methionine = N(6),N(6),N(6)-trimethyl-L-lysyl-[protein] + 3 S-adenosyl-L-homocysteine + 3 H(+). Functionally, methylates ribosomal protein L11. The protein is Ribosomal protein L11 methyltransferase of Gloeothece citriformis (strain PCC 7424) (Cyanothece sp. (strain PCC 7424)).